The primary structure comprises 447 residues: Argininosuccinate synthase (447 aa).

ATP is bound by residues Ala-17–Ser-25 and Ala-43. Residue Tyr-99 participates in L-citrulline binding. Gly-129 and Thr-131 together coordinate ATP. L-aspartate is bound by residues Thr-131, Asn-135, and Asp-136. Residue Asn-135 coordinates L-citrulline. Asp-136 serves as a coordination point for ATP. Positions 139 and 192 each coordinate L-citrulline. Asp-194 contacts ATP. L-citrulline is bound by residues Thr-201, Glu-203, and Glu-280.

Belongs to the argininosuccinate synthase family. Type 2 subfamily. As to quaternary structure, homotetramer.

The protein resides in the cytoplasm. It catalyses the reaction L-citrulline + L-aspartate + ATP = 2-(N(omega)-L-arginino)succinate + AMP + diphosphate + H(+). It participates in amino-acid biosynthesis; L-arginine biosynthesis; L-arginine from L-ornithine and carbamoyl phosphate: step 2/3. This chain is Argininosuccinate synthase, found in Salmonella agona (strain SL483).